A 149-amino-acid polypeptide reads, in one-letter code: Cytochrome c-type biogenesis protein CcmE (149 aa).

Residues 1–7 (MKARHKR) are Cytoplasmic-facing. A helical; Signal-anchor for type II membrane protein membrane pass occupies residues 8–28 (LGLIVAGLAALGLGAALVLSA). Residues 29–149 (FQKNLVFFFT…GAPALAGALK (121 aa)) are Periplasmic-facing. The heme site is built by His-123 and Tyr-127.

It belongs to the CcmE/CycJ family.

It localises to the cell inner membrane. Heme chaperone required for the biogenesis of c-type cytochromes. Transiently binds heme delivered by CcmC and transfers the heme to apo-cytochromes in a process facilitated by CcmF and CcmH. This chain is Cytochrome c-type biogenesis protein CcmE, found in Polaromonas naphthalenivorans (strain CJ2).